The sequence spans 1034 residues: Translation initiation factor IF-2 (1034 aa).

Disordered stretches follow at residues 118–140 (AAEA…QSVE) and 154–446 (EAEA…NESA). 2 stretches are compositionally biased toward low complexity: residues 162 to 178 (TPPV…AAAP) and 212 to 228 (PAVK…PAAS). Residues 304-315 (DRAREDARRAAE) are compositionally biased toward basic and acidic residues. Positions 535–702 (PRAPVVTVMG…NVLLQAEILE (168 aa)) constitute a tr-type G domain. Positions 544-551 (GHVDHGKT) are G1. 544 to 551 (GHVDHGKT) contributes to the GTP binding site. The interval 569 to 573 (GITQH) is G2. The segment at 590–593 (DTPG) is G3. Residues 590 to 594 (DTPGH) and 644 to 647 (NKID) contribute to the GTP site. The tract at residues 644-647 (NKID) is G4. The segment at 680 to 682 (SAK) is G5.

This sequence belongs to the TRAFAC class translation factor GTPase superfamily. Classic translation factor GTPase family. IF-2 subfamily.

The protein resides in the cytoplasm. Its function is as follows. One of the essential components for the initiation of protein synthesis. Protects formylmethionyl-tRNA from spontaneous hydrolysis and promotes its binding to the 30S ribosomal subunits. Also involved in the hydrolysis of GTP during the formation of the 70S ribosomal complex. This chain is Translation initiation factor IF-2, found in Bordetella avium (strain 197N).